Here is a 154-residue protein sequence, read N- to C-terminus: Aspartate carbamoyltransferase regulatory chain (154 aa).

Residues cysteine 109, cysteine 114, cysteine 138, and cysteine 141 each coordinate Zn(2+).

The protein belongs to the PyrI family. Contains catalytic and regulatory chains. It depends on Zn(2+) as a cofactor.

In terms of biological role, involved in allosteric regulation of aspartate carbamoyltransferase. The chain is Aspartate carbamoyltransferase regulatory chain from Pectobacterium carotovorum subsp. carotovorum (strain PC1).